A 549-amino-acid chain; its full sequence is Glucose-6-phosphate isomerase (549 aa).

The Proton donor role is filled by glutamate 353. Catalysis depends on residues histidine 384 and lysine 513.

It belongs to the GPI family.

The protein localises to the cytoplasm. The catalysed reaction is alpha-D-glucose 6-phosphate = beta-D-fructose 6-phosphate. It functions in the pathway carbohydrate biosynthesis; gluconeogenesis. The protein operates within carbohydrate degradation; glycolysis; D-glyceraldehyde 3-phosphate and glycerone phosphate from D-glucose: step 2/4. In terms of biological role, catalyzes the reversible isomerization of glucose-6-phosphate to fructose-6-phosphate. The polypeptide is Glucose-6-phosphate isomerase (Bartonella bacilliformis (strain ATCC 35685 / KC583 / Herrer 020/F12,63)).